Here is a 620-residue protein sequence, read N- to C-terminus: Sorbicillinoid biosynthetic cluster transcription factor 1 (620 aa).

The zn(2)-C6 fungal-type DNA-binding region spans 10 to 37; it reads CEECRRRKARCDRVRPQCGICADAGRTC. The segment at 285-308 is disordered; the sequence is HDDETSPNENSGSCPSVSPSTTQN. Residues 291-308 show a composition bias toward polar residues; that stretch reads PNENSGSCPSVSPSTTQN.

Its subcellular location is the nucleus. Transcription factor that acts as the main regulator of the gene cluster that mediates the biosynthesis of sorbicillinoids, a diverse group of yellow secondary metabolites that restrict growth of competing pathogenic fungi but not of bacteria. This chain is Sorbicillinoid biosynthetic cluster transcription factor 1, found in Penicillium rubens (strain ATCC 28089 / DSM 1075 / NRRL 1951 / Wisconsin 54-1255) (Penicillium chrysogenum).